A 78-amino-acid chain; its full sequence is Acyl carrier protein (78 aa).

Residues 2 to 77 (SDTAERVKKI…DAVKFIDKAS (76 aa)) form the Carrier domain. Residue S37 is modified to O-(pantetheine 4'-phosphoryl)serine.

Belongs to the acyl carrier protein (ACP) family. Post-translationally, 4'-phosphopantetheine is transferred from CoA to a specific serine of apo-ACP by AcpS. This modification is essential for activity because fatty acids are bound in thioester linkage to the sulfhydryl of the prosthetic group.

It localises to the cytoplasm. It functions in the pathway lipid metabolism; fatty acid biosynthesis. Functionally, carrier of the growing fatty acid chain in fatty acid biosynthesis. The sequence is that of Acyl carrier protein from Brucella abortus (strain S19).